Consider the following 238-residue polypeptide: MDAVNFSILAPRYGSHPMMSAWSGIGTSDMNGGAFNWGGIWSGIKNFGSNVKNWGSRAWNSQTGKLLRQKLNDTKVREKLVEGISTGVHGALDIANQEIAKQIERRLERHEPLEPEVEEETVETKSEAKAPLVVEMPLKRPRDEDLVITADEPPSYEETIKTMAPLVPMTRPHPSMARPVIADRPTTLELKPSDQPPPYSPQSSNMPVTAPVRSRGWQGTLANIVGVGLSNVKRRRCF.

Residues 1–33 (MDAVNFSILAPRYGSHPMMSAWSGIGTSDMNGG) constitute a propeptide that is removed on maturation. Positions 34–54 (AFNWGGIWSGIKNFGSNVKNW) are amphipathic alpha-helix essential for membrane lytic activity. The involved in endosomal membrane lysis stretch occupies residues 36 to 53 (NWGGIWSGIKNFGSNVKN). The tract at residues 48-74 (GSNVKNWGSRAWNSQTGKLLRQKLNDT) is interaction with hexon protein. The Nuclear export signal signature appears at 67-76 (LRQKLNDTKV). The short motif at 153–156 (PPSY) is the PPXY motif element. The disordered stretch occupies residues 187 to 212 (TLELKPSDQPPPYSPQSSNMPVTAPV). The Nuclear export signal motif lies at 219–230 (GTLANIVGVGLS). The tract at residues 221–227 (LANIVGV) is interaction with hexon protein. The binds to importin alpha/beta, involved in hexon nuclear import stretch occupies residues 228–238 (GLSNVKRRRCF). The short motif at 233–236 (KRRR) is the Nuclear localization signal element.

This sequence belongs to the adenoviridae protein VI family. In terms of assembly, interacts with hexon protein; this interaction allows nuclear import of hexon trimers and possibly pre-capsid assembly. Interacts (via C-terminal NLS) with importin alpha/beta. As to quaternary structure, interacts (via PPxY motif) with host NEDD4 ubiquitine ligase; this interaction might play a role in virus intracellular transport during entry. Part of a complex composed of the core-capsid bridging protein, the endosome lysis protein VI and the hexon-linking protein VIII; these interactions bridge the virus core to the capsid. Interacts with peripentonal hexons; this interaction stabilizes the capsid by gluing two peripentonal hexons together and joining them with an adjacent group-of-nine hexon. Heterodimer with the viral protease; disulfide-linked. Interacts with the viral protease. In terms of processing, ubiquitinated by Nedd4 following partial capsid disassembly; which might play a role in intracellular virus movement during entry. Contains the major nuclear import and export signals. Proteolytically removed during virion maturation. The processing of the C-terminus turns the precursor into a mature viral structural protein and abrogates its ability to promote hexon import and act as a potential chaperone protein.

Its subcellular location is the host nucleus. It localises to the host cytoplasm. It is found in the virion. In terms of biological role, during virus assembly, promotes hexon trimers nuclear import through nuclear pore complexes via an importin alpha/beta-dependent mechanism. By analogy to herpesviruses capsid assembly, might act as a chaperone to promote the formation of the icosahedral capsid. Structural component of the virion that provides increased stability to the particle shell through its interaction with the core-capsid bridging protein and the hexon-linking protein VIII. Fibers shedding during virus entry into host cell allows the endosome lysis protein to be exposed as a membrane-lytic peptide. Exhibits pH-independent membrane fragmentation activity and probably mediates viral rapid escape from host endosome via organellar membrane lysis. It is not clear if it then remains partially associated with the capsid and involved in the intracellular microtubule-dependent transport of capsid to the nucleus, or if it is lost during endosomal penetration. Functionally, cofactor that activates the viral protease. Binds to viral protease in a 1:1 ratio. The polypeptide is Pre-protein VI (Canine adenovirus serotype 1 (strain CLL) (CAdV-1)).